Consider the following 58-residue polypeptide: Small ribosomal subunit protein bS21 (58 aa).

Residues Glu39 to Phe58 form a disordered region. Residues Val43 to Phe58 show a composition bias toward basic residues.

It belongs to the bacterial ribosomal protein bS21 family.

This is Small ribosomal subunit protein bS21 from Streptococcus pneumoniae (strain ATCC BAA-255 / R6).